The following is a 309-amino-acid chain: HPr kinase/phosphorylase (309 aa).

Catalysis depends on residues His138 and Lys159. ATP is bound at residue 153–160 (GDSGIGKS). Ser160 serves as a coordination point for Mg(2+). The active-site Proton acceptor; for phosphorylation activity. Proton donor; for dephosphorylation activity is the Asp177. The tract at residues 201-210 (LEIRGVGIID) is important for the catalytic mechanism of both phosphorylation and dephosphorylation. Glu202 is a binding site for Mg(2+). Arg243 is a catalytic residue. The interval 264-269 (PVKTGR) is important for the catalytic mechanism of dephosphorylation.

This sequence belongs to the HPrK/P family. Homohexamer. Requires Mg(2+) as cofactor.

It carries out the reaction [HPr protein]-L-serine + ATP = [HPr protein]-O-phospho-L-serine + ADP + H(+). It catalyses the reaction [HPr protein]-O-phospho-L-serine + phosphate + H(+) = [HPr protein]-L-serine + diphosphate. Functionally, catalyzes the ATP- as well as the pyrophosphate-dependent phosphorylation of a specific serine residue in HPr, a phosphocarrier protein of the phosphoenolpyruvate-dependent sugar phosphotransferase system (PTS). HprK/P also catalyzes the pyrophosphate-producing, inorganic phosphate-dependent dephosphorylation (phosphorolysis) of seryl-phosphorylated HPr (P-Ser-HPr). The two antagonistic activities of HprK/P are regulated by several intracellular metabolites, which change their concentration in response to the absence or presence of rapidly metabolisable carbon sources (glucose, fructose, etc.) in the growth medium. Therefore, by controlling the phosphorylation state of HPr, HPrK/P is a sensor enzyme that plays a major role in the regulation of carbon metabolism and sugar transport: it mediates carbon catabolite repression (CCR), and regulates PTS-catalyzed carbohydrate uptake and inducer exclusion. The protein is HPr kinase/phosphorylase of Streptococcus thermophilus (strain ATCC BAA-491 / LMD-9).